The sequence spans 279 residues: 2-dehydro-3-deoxyphosphooctonate aldolase (279 aa).

Belongs to the KdsA family.

Its subcellular location is the cytoplasm. The enzyme catalyses D-arabinose 5-phosphate + phosphoenolpyruvate + H2O = 3-deoxy-alpha-D-manno-2-octulosonate-8-phosphate + phosphate. It functions in the pathway carbohydrate biosynthesis; 3-deoxy-D-manno-octulosonate biosynthesis; 3-deoxy-D-manno-octulosonate from D-ribulose 5-phosphate: step 2/3. The protein operates within bacterial outer membrane biogenesis; lipopolysaccharide biosynthesis. In Azoarcus sp. (strain BH72), this protein is 2-dehydro-3-deoxyphosphooctonate aldolase.